We begin with the raw amino-acid sequence, 489 residues long: Cytochrome P450 2C41 (489 aa).

Cysteine 434 is a heme binding site.

It belongs to the cytochrome P450 family. Heme is required as a cofactor.

The protein resides in the endoplasmic reticulum membrane. Its subcellular location is the microsome membrane. It catalyses the reaction an organic molecule + reduced [NADPH--hemoprotein reductase] + O2 = an alcohol + oxidized [NADPH--hemoprotein reductase] + H2O + H(+). Functionally, cytochromes P450 are a group of heme-thiolate monooxygenases. In liver microsomes, this enzyme is involved in an NADPH-dependent electron transport pathway. It oxidizes a variety of structurally unrelated compounds, including steroids, fatty acids, and xenobiotics. In Canis lupus familiaris (Dog), this protein is Cytochrome P450 2C41 (CYP2C41).